A 388-amino-acid polypeptide reads, in one-letter code: Queuine tRNA-ribosyltransferase (388 aa).

Catalysis depends on D90, which acts as the Proton acceptor. Residues 90 to 94, D144, Q205, and G232 contribute to the substrate site; that span reads DSGGF. Residues 263–269 form an RNA binding region; it reads GVGTPED. D282 (nucleophile) is an active-site residue. The tract at residues 287–291 is RNA binding; important for wobble base 34 recognition; the sequence is TRNAR. Zn(2+) is bound by residues C320, C322, C325, and H351.

It belongs to the queuine tRNA-ribosyltransferase family. In terms of assembly, homodimer. Within each dimer, one monomer is responsible for RNA recognition and catalysis, while the other monomer binds to the replacement base PreQ1. Zn(2+) serves as cofactor.

The enzyme catalyses 7-aminomethyl-7-carbaguanine + guanosine(34) in tRNA = 7-aminomethyl-7-carbaguanosine(34) in tRNA + guanine. Its pathway is tRNA modification; tRNA-queuosine biosynthesis. Functionally, catalyzes the base-exchange of a guanine (G) residue with the queuine precursor 7-aminomethyl-7-deazaguanine (PreQ1) at position 34 (anticodon wobble position) in tRNAs with GU(N) anticodons (tRNA-Asp, -Asn, -His and -Tyr). Catalysis occurs through a double-displacement mechanism. The nucleophile active site attacks the C1' of nucleotide 34 to detach the guanine base from the RNA, forming a covalent enzyme-RNA intermediate. The proton acceptor active site deprotonates the incoming PreQ1, allowing a nucleophilic attack on the C1' of the ribose to form the product. After dissociation, two additional enzymatic reactions on the tRNA convert PreQ1 to queuine (Q), resulting in the hypermodified nucleoside queuosine (7-(((4,5-cis-dihydroxy-2-cyclopenten-1-yl)amino)methyl)-7-deazaguanosine). The polypeptide is Queuine tRNA-ribosyltransferase (Campylobacter curvus (strain 525.92)).